The sequence spans 338 residues: Eukaryotic translation initiation factor 3 subunit H (338 aa).

Residues Val22–Ala154 form the MPN domain.

Belongs to the eIF-3 subunit H family. As to quaternary structure, component of the eukaryotic translation initiation factor 3 (eIF-3) complex. The eIF-3 complex interacts with pix. Interacts with mxt.

The protein resides in the cytoplasm. Its function is as follows. Component of the eukaryotic translation initiation factor 3 (eIF-3) complex, which is involved in protein synthesis of a specialized repertoire of mRNAs and, together with other initiation factors, stimulates binding of mRNA and methionyl-tRNAi to the 40S ribosome. The eIF-3 complex specifically targets and initiates translation of a subset of mRNAs involved in cell proliferation. The protein is Eukaryotic translation initiation factor 3 subunit H of Drosophila erecta (Fruit fly).